We begin with the raw amino-acid sequence, 341 residues long: S-adenosylmethionine:tRNA ribosyltransferase-isomerase (341 aa).

It belongs to the QueA family. Monomer.

The protein localises to the cytoplasm. The enzyme catalyses 7-aminomethyl-7-carbaguanosine(34) in tRNA + S-adenosyl-L-methionine = epoxyqueuosine(34) in tRNA + adenine + L-methionine + 2 H(+). Its pathway is tRNA modification; tRNA-queuosine biosynthesis. Transfers and isomerizes the ribose moiety from AdoMet to the 7-aminomethyl group of 7-deazaguanine (preQ1-tRNA) to give epoxyqueuosine (oQ-tRNA). The sequence is that of S-adenosylmethionine:tRNA ribosyltransferase-isomerase from Clostridium botulinum (strain Kyoto / Type A2).